The sequence spans 652 residues: DNA ligase (652 aa).

Residues 30-34, 79-80, and E108 each bind NAD(+); these read DEVYD and SL. Catalysis depends on K110, which acts as the N6-AMP-lysine intermediate. NAD(+) is bound by residues R131, E165, K280, and K304. Positions 398, 401, 414, and 419 each coordinate Zn(2+). A BRCT domain is found at 574–652; the sequence is AKENPFKGKS…DEMRSKIEQA (79 aa).

The protein belongs to the NAD-dependent DNA ligase family. LigA subfamily. Mg(2+) is required as a cofactor. Requires Mn(2+) as cofactor.

The enzyme catalyses NAD(+) + (deoxyribonucleotide)n-3'-hydroxyl + 5'-phospho-(deoxyribonucleotide)m = (deoxyribonucleotide)n+m + AMP + beta-nicotinamide D-nucleotide.. In terms of biological role, DNA ligase that catalyzes the formation of phosphodiester linkages between 5'-phosphoryl and 3'-hydroxyl groups in double-stranded DNA using NAD as a coenzyme and as the energy source for the reaction. It is essential for DNA replication and repair of damaged DNA. This Sulfurimonas denitrificans (strain ATCC 33889 / DSM 1251) (Thiomicrospira denitrificans (strain ATCC 33889 / DSM 1251)) protein is DNA ligase.